Reading from the N-terminus, the 124-residue chain is Large ribosomal subunit protein bL19 (124 aa).

This sequence belongs to the bacterial ribosomal protein bL19 family.

This protein is located at the 30S-50S ribosomal subunit interface and may play a role in the structure and function of the aminoacyl-tRNA binding site. The protein is Large ribosomal subunit protein bL19 of Orientia tsutsugamushi (strain Boryong) (Rickettsia tsutsugamushi).